We begin with the raw amino-acid sequence, 517 residues long: Dopamine receptor 4 (517 aa).

Over 1–46 the chain is Extracellular; the sequence is MLAYGSDPNAEDLYITMTPSVSTENDTTVWATEEPAAIVWRHPLLA. A glycan (N-linked (GlcNAc...) asparagine) is linked at Asn25. The helical transmembrane segment at 47-67 threads the bilayer; that stretch reads IALFSICLLTVAGNCLVVIAV. Topologically, residues 68–77 are cytoplasmic; sequence CTKKYLRNPT. The helical transmembrane segment at 78–98 threads the bilayer; sequence GYLIISLAIADLIVGVIVMPM. Topologically, residues 99–108 are extracellular; the sequence is NSLFEIANHT. Residue Asn106 is glycosylated (N-linked (GlcNAc...) asparagine). The chain crosses the membrane as a helical span at residues 109 to 129; sequence WLFGLMMCDVFHAMDILASTA. Residues 130–159 lie on the Cytoplasmic side of the membrane; the sequence is SIWNLCVISLDRYMAGQDPIGYRDKVSKRR. The chain crosses the membrane as a helical span at residues 160 to 180; the sequence is ILMAILSVWVLSAILSFPGII. At 181–209 the chain is on the extracellular side; the sequence is WWRTSSPHLYEDQSQCLFTDSKMYVSFSS. The chain crosses the membrane as a helical span at residues 210 to 230; that stretch reads LVSFYIPLFLILFAYGKVYII. Topologically, residues 231–409 are cytoplasmic; the sequence is ATRHSKGMRM…YVHEQRAART (179 aa). The interval 309 to 339 is disordered; sequence NDRGEHNNNNTVRQPLLRGTEGCHSDSISRS. The helical transmembrane segment at 410–430 threads the bilayer; it reads LSIVVGAFILCWTPFFVFTPL. Residues 431–442 lie on the Extracellular side of the membrane; sequence TAFCESCFSNKE. The chain crosses the membrane as a helical span at residues 443-463; it reads TIFTFVTWAGHLNSMLNPLIY. The Cytoplasmic segment spans residues 464–517; it reads SRFSRDFRRAFKQILTCQRQQKVKTAFKTPLSLVFTQLISVTQMWEQPPNTSIE.

This sequence belongs to the G-protein coupled receptor 1 family. In terms of tissue distribution, expressed in pharyngeal neurons I1 and I2, neurons ASG, AVL, CAN, PQR, vulva, intestine, rectal glands and rectal epithelial glands. Also expressed in neurons in ray 8 in males.

It localises to the cell membrane. In terms of biological role, receptor for dopamine. The activity of this receptor is mediated by G proteins which activate adenylyl cyclase. In terms of antagonist responses, would be classed with the D1-like dopamine receptor group. This is Dopamine receptor 4 (dop-4) from Caenorhabditis elegans.